Reading from the N-terminus, the 206-residue chain is Flavin reductase (NADPH) (206 aa).

NADP(+) contacts are provided by G10, T12, G13, Q14, T15, R35, S38, and R39. S42 carries the post-translational modification Phosphoserine. NADP(+) is bound by residues D54, V55, L75, G76, and R78. Residue S82 is modified to Phosphoserine. 5 residues coordinate NADP(+): M87, C109, H132, H153, and I154. Catalysis depends on C109, which acts as the S-nitroso-cysteine intermediate; for S-nitroso-CoA-dependent nitrosyltransferase activity. C188 serves as the catalytic S-nitroso-cysteine intermediate; for S-nitroso-CoA-dependent nitrosyltransferase activity.

The protein belongs to the BLVRB family. In terms of assembly, monomer. As to expression, predominantly expressed in liver and erythrocytes. At lower levels in heart, lung, adrenal gland and cerebrum. Expressed in adult red blood cells.

It is found in the cytoplasm. The enzyme catalyses reduced riboflavin + NADP(+) = riboflavin + NADPH + 2 H(+). The catalysed reaction is bilirubin IXbeta + NADP(+) = biliverdin IXbeta + NADPH + H(+). It catalyses the reaction FMNH2 + NAD(+) = FMN + NADH + 2 H(+). It carries out the reaction FMNH2 + NADP(+) = FMN + NADPH + 2 H(+). The enzyme catalyses S-nitroso-CoA + L-cysteinyl-[protein] = S-nitroso-L-cysteinyl-[protein] + CoA. The catalysed reaction is L-cysteinyl-[SCAN] + S-nitroso-CoA = S-nitroso-L-cysteinyl-[SCAN] + CoA. It catalyses the reaction S-nitroso-L-cysteinyl-[SCAN] + L-cysteinyl-[protein] = L-cysteinyl-[SCAN] + S-nitroso-L-cysteinyl-[protein]. With respect to regulation, mesobiliverdin acts as a competitive inhibitor for flavin reduction, indicating that flavin and tetrapyrrole substrates compete for the same site. Inhibited by a wide range of xanthene-based drugs, such as phloxine B, erythrosin B, tamibarotene, sulfasalazine, olsalazine, febuxostat, ataluren (PTC124) and deferasirox. Enzyme that can both act as a NAD(P)H-dependent reductase and a S-nitroso-CoA-dependent nitrosyltransferase. Promotes fetal heme degradation during development. Also expressed in adult tissues, where it acts as a regulator of hematopoiesis, intermediary metabolism (glutaminolysis, glycolysis, TCA cycle and pentose phosphate pathway) and insulin signaling. Has a broad specificity oxidoreductase activity by catalyzing the NAD(P)H-dependent reduction of a variety of flavins, such as riboflavin, FAD or FMN, biliverdins, methemoglobin and PQQ (pyrroloquinoline quinone). Contributes to fetal heme catabolism by catalyzing reduction of biliverdin IXbeta into bilirubin IXbeta in the liver. Biliverdin IXbeta, which constitutes the major heme catabolite in the fetus is not present in adult. Does not reduce bilirubin IXalpha. Can also reduce the complexed Fe(3+) iron to Fe(2+) in the presence of FMN and NADPH. Acts as a protein nitrosyltransferase by catalyzing nitrosylation of cysteine residues of target proteins, such as HMOX2, INSR and IRS1. S-nitroso-CoA-dependent nitrosyltransferase activity is mediated via a 'ping-pong' mechanism: BLVRB first associates with both S-nitroso-CoA and protein substrate, nitric oxide group is then transferred from S-nitroso-CoA to Cys-109 and Cys-188 residues of BLVRB and from S-nitroso-BLVRB to the protein substrate. Inhibits insulin signaling by mediating nitrosylation of INSR and IRS1, leading to their inhibition. In Homo sapiens (Human), this protein is Flavin reductase (NADPH).